We begin with the raw amino-acid sequence, 328 residues long: Probable ABC transporter permease YtrC (328 aa).

The next 8 helical transmembrane spans lie at 16–36, 60–80, 110–130, 144–164, 167–187, 236–256, 277–297, and 300–320; these read VVILLSIAFLVLANPLSIVNT, ISNLIDINWVPGVILAVCFLG, GFVIVLSQLIGFLLAWLLILV, IGVIVISFMAFSLVMAAGALT, AFAQLLTAFSAAILPYLIIAL, YLLLIPAVMSMLFYLIGFISF, VQILVMAFGILGFGLFGYYTG, and IIGYILGMIIGAVAGFFVSYF.

This sequence belongs to the ABC-5 integral membrane protein family. As to quaternary structure, the complex is composed of 2 ATP-binding proteins (YtrB and YtrE), 2 transmembrane proteins (YtrC and YtrD) and a solute-binding protein (YtrF).

The protein localises to the cell membrane. Its function is as follows. Part of the ABC transporter complex YtrBCDEF that plays a role in acetoin utilization during stationary phase and sporulation. This Bacillus subtilis (strain 168) protein is Probable ABC transporter permease YtrC (ytrC).